The sequence spans 627 residues: DNA mismatch repair protein MutL (627 aa).

Belongs to the DNA mismatch repair MutL/HexB family.

This protein is involved in the repair of mismatches in DNA. It is required for dam-dependent methyl-directed DNA mismatch repair. May act as a 'molecular matchmaker', a protein that promotes the formation of a stable complex between two or more DNA-binding proteins in an ATP-dependent manner without itself being part of a final effector complex. This chain is DNA mismatch repair protein MutL, found in Mesorhizobium japonicum (strain LMG 29417 / CECT 9101 / MAFF 303099) (Mesorhizobium loti (strain MAFF 303099)).